The following is a 611-amino-acid chain: Homeobox protein BEL1 homolog (611 aa).

Disordered regions lie at residues 63 to 87, 101 to 133, 141 to 160, and 174 to 195; these read QIRMTSGSDHHHHHHQTSGGTDQNQ, VNNDFPSEVNDERPPQRPSQGLSLSLSSSNPTS, LRPQQQQQQGYSGNKSTQHQ, and SHHQNNNNNNHQHHNHHQFQIG. The span at 118-133 shows a compositional bias: low complexity; it reads PSQGLSLSLSSSNPTS. The span at 174–183 shows a compositional bias: low complexity; sequence SHHQNNNNNN. Residues 197–213 are SR/KY domain; it reads SKYLSPAQELLSEFCSL. The disordered stretch occupies residues 225–263; it reads MKHKKKQKGKQQEEWDTSHHSNNDQHDQSATTSSKKHVP. Basic and acidic residues predominate over residues 234-251; it reads KQQEEWDTSHHSNNDQHD. The interval 269 to 340 is BELL domain; the sequence is EFMELQKRKA…CLKDGLVGQI (72 aa). Positions 275–290 match the Bipartite nuclear localization motif; the sequence is KRKAKLLSMLEELKRR. A DNA-binding region (homeobox) is located at residues 391–453; it reads PWRPQRGLPE…NARVRLWKPM (63 aa).

The protein belongs to the TALE/BELL homeobox family. In terms of assembly, may form heterodimeric complexes with TALE/KNOX proteins STM, KNAT1/BP, KNAT2 and KNAT5. Interacts with AG-SEP1 and AG-SEP3 dimers. Interacts with KNATM, isoform KNATM-B. Interacts with BZIP30. Expressed in both floral and vegetative tissues.

It is found in the nucleus. Plays a major role in ovule patterning and in determination of integument identity via its interaction with MADS-box factors. Formation of complex with AG-SEP dimers negatively regulates the carpel identity process and favors the maintenance of ovule identity. BEL1-STM complex maintains the indeterminacy of the inflorescence meristem. Required, with SPL, for cytokinin-induced PIN1 expression in ovules. This is Homeobox protein BEL1 homolog (BEL1) from Arabidopsis thaliana (Mouse-ear cress).